Here is a 305-residue protein sequence, read N- to C-terminus: Homoserine kinase (305 aa).

90 to 100 (PLARGLGSSAS) lines the ATP pocket.

This sequence belongs to the GHMP kinase family. Homoserine kinase subfamily.

It is found in the cytoplasm. The catalysed reaction is L-homoserine + ATP = O-phospho-L-homoserine + ADP + H(+). The protein operates within amino-acid biosynthesis; L-threonine biosynthesis; L-threonine from L-aspartate: step 4/5. In terms of biological role, catalyzes the ATP-dependent phosphorylation of L-homoserine to L-homoserine phosphate. The chain is Homoserine kinase from Staphylococcus haemolyticus (strain JCSC1435).